The primary structure comprises 336 residues: Glutamyl endopeptidase (336 aa).

The first 29 residues, 1–29, serve as a signal peptide directing secretion; sequence MKGKFLKVSSLFVATLTTATLVSSPAANA. The propeptide occupies 30–68; the sequence is LSSKAMDNHPQQTQSSKQQTPKIQKGGNLKPLEQREHAN. The interval 34-61 is disordered; that stretch reads AMDNHPQQTQSSKQQTPKIQKGGNLKPL. Positions 39-51 are enriched in low complexity; that stretch reads PQQTQSSKQQTPK. Catalysis depends on charge relay system residues His119, Asp161, and Ser237. The tract at residues 283-336 is disordered; sequence FANDDQPNNPDNPDNPNNPDNPNNPDEPNNPDNPNNPDNPDNGDNNNSDNPDAA. Positions 286-336 are enriched in low complexity; sequence DDQPNNPDNPDNPNNPDNPNNPDEPNNPDNPNNPDNPDNGDNNNSDNPDAA. 11 consecutive repeat copies span residues 289 to 291, 292 to 294, 295 to 297, 298 to 300, 301 to 303, 304 to 306, 310 to 312, 313 to 315, 316 to 318, 319 to 321, and 322 to 324. Positions 289–324 are 11 X 3 AA repeats of P-[DN]-N; the sequence is PNNPDNPDNPNNPDNPNNPDEPNNPDNPNNPDNPDN.

This sequence belongs to the peptidase S1B family. Post-translationally, proteolytically cleaved by aureolysin (aur). This cleavage leads to the activation of SspA.

It is found in the secreted. The enzyme catalyses Preferential cleavage: Glu-|-Xaa, Asp-|-Xaa.. Functionally, preferentially cleaves peptide bonds on the carboxyl-terminal side of aspartate and glutamate. Along with other extracellular proteases it is involved in colonization and infection of human tissues. Required for proteolytic maturation of thiol protease SspB and inactivation of SspC, an inhibitor of SspB. It is the most important protease for degradation of fibronectin-binding protein (FnBP) and surface protein A, which are involved in adherence to host cells. May also protect bacteria against host defense mechanism by cleaving the immunoglobulin classes IgG, IgA and IgM. May be involved in the stability of secreted lipases. This is Glutamyl endopeptidase (sspA) from Staphylococcus aureus (strain NCTC 8325 / PS 47).